A 944-amino-acid chain; its full sequence is Spindle pole body component 110 (944 aa).

Threonine 18 is subject to Phosphothreonine. The tract at residues 23 to 110 (IKSKRNTTQT…RKRNLIDDLK (88 aa)) is disordered. Positions 28 to 46 (NTTQTQVVSPTKVPNANNG) are enriched in polar residues. The Nuclear localization signal motif lies at 54-59 (KKRQRR). Serine 60 is modified (phosphoserine; by MPS1). Phosphothreonine; by MPS1 is present on residues threonine 64 and threonine 68. Over residues 67-78 (STRLFSEASQFD) the composition is skewed to polar residues. At serine 80 the chain carries Phosphoserine. The span at 96 to 110 (NVDKSRKRNLIDDLK) shows a compositional bias: basic and acidic residues. Residues 164–791 (EIKSLKHEIK…NRRLEERLIL (628 aa)) are a coiled coil. Phosphoserine is present on serine 529. 2 short sequence motifs (nuclear localization signal) span residues 726–731 (KEKYKR) and 742–747 (RLRREK). The calmodulin-binding stretch occupies residues 900-927 (SFKTVALLVLACVRMKRIAFYRRSDDNR).

It belongs to the SPC110 family. As to quaternary structure, homodimer. Component of the SPC110 complex containing at least CMD1, SPC29 and SCP110. Interacts with SPC97 and SPC98.

It is found in the nucleus. It localises to the cytoplasm. The protein resides in the cytoskeleton. Its subcellular location is the microtubule organizing center. The protein localises to the spindle pole body. In terms of biological role, component of the spindle pole body (SPB) required for the proper execution of spindle pole body (SPB) duplication. Potential role in cross-linking filaments or anchoring other molecules. It is essential for growth. This Saccharomyces cerevisiae (strain ATCC 204508 / S288c) (Baker's yeast) protein is Spindle pole body component 110 (SPC110).